Reading from the N-terminus, the 541-residue chain is Chaperonin GroEL 2 (541 aa).

ATP-binding positions include 29 to 32, 86 to 90, G413, 476 to 478, and D492; these read TLGP, DGTTT, and NAA.

Belongs to the chaperonin (HSP60) family. In terms of assembly, forms a cylinder of 14 subunits composed of two heptameric rings stacked back-to-back. Interacts with the co-chaperonin GroES.

It is found in the secreted. The protein localises to the capsule. Its subcellular location is the cell surface. It localises to the cell wall. It carries out the reaction ATP + H2O + a folded polypeptide = ADP + phosphate + an unfolded polypeptide.. In terms of biological role, together with its co-chaperonin GroES, plays an essential role in assisting protein folding. The GroEL-GroES system forms a nano-cage that allows encapsulation of the non-native substrate proteins and provides a physical environment optimized to promote and accelerate protein folding. The chain is Chaperonin GroEL 2 from Mycolicibacterium paratuberculosis (strain ATCC BAA-968 / K-10) (Mycobacterium paratuberculosis).